A 499-amino-acid polypeptide reads, in one-letter code: Probable cytosol aminopeptidase (499 aa).

Mn(2+) is bound by residues lysine 269 and aspartate 274. Lysine 281 is an active-site residue. Positions 292, 351, and 353 each coordinate Mn(2+). The active site involves arginine 355.

It belongs to the peptidase M17 family. It depends on Mn(2+) as a cofactor.

The protein resides in the cytoplasm. It carries out the reaction Release of an N-terminal amino acid, Xaa-|-Yaa-, in which Xaa is preferably Leu, but may be other amino acids including Pro although not Arg or Lys, and Yaa may be Pro. Amino acid amides and methyl esters are also readily hydrolyzed, but rates on arylamides are exceedingly low.. It catalyses the reaction Release of an N-terminal amino acid, preferentially leucine, but not glutamic or aspartic acids.. Its function is as follows. Presumably involved in the processing and regular turnover of intracellular proteins. Catalyzes the removal of unsubstituted N-terminal amino acids from various peptides. The chain is Probable cytosol aminopeptidase from Haemophilus ducreyi (strain 35000HP / ATCC 700724).